A 212-amino-acid polypeptide reads, in one-letter code: Uracil-DNA glycosylase (212 aa).

Asp59 acts as the Proton acceptor in catalysis.

The protein belongs to the uracil-DNA glycosylase (UDG) superfamily. UNG family.

Its subcellular location is the cytoplasm. The enzyme catalyses Hydrolyzes single-stranded DNA or mismatched double-stranded DNA and polynucleotides, releasing free uracil.. Its function is as follows. Excises uracil residues from the DNA which can arise as a result of misincorporation of dUMP residues by DNA polymerase or due to deamination of cytosine. The chain is Uracil-DNA glycosylase from Ureaplasma urealyticum serovar 10 (strain ATCC 33699 / Western).